A 316-amino-acid polypeptide reads, in one-letter code: Melanocyte-stimulating hormone receptor (316 aa).

Topologically, residues 1-37 are extracellular; it reads MPMQGAHRKLLGSLNSTPTATSNLGLAANHTGAPCLE. A glycan (N-linked (GlcNAc...) asparagine) is linked at asparagine 29. A helical membrane pass occupies residues 38–63; it reads VSIPDGLFLSLGLVSLVENVLVVAAI. Topologically, residues 64 to 72 are cytoplasmic; that stretch reads AKNRNLHSS. Residues 73–93 form a helical membrane-spanning segment; that stretch reads MYCFICCLALSDLLVSGSNML. The Extracellular segment spans residues 94-118; that stretch reads ETAVILLLEAGALATRTSVVQQLHN. A helical transmembrane segment spans residues 119–140; it reads TIDVLTCSSMLCSLCFLGAIAV. The Cytoplasmic segment spans residues 141 to 163; sequence DRYISIFYALRYHSIMTLPRAQR. The helical transmembrane segment at 164-183 threads the bilayer; sequence AIAAIWVASVLSSTLFITYY. At 184 to 191 the chain is on the extracellular side; it reads DHAAVLLC. A helical membrane pass occupies residues 192–211; it reads LVVFFLAMLVLMAVLYVHML. At 212–240 the chain is on the cytoplasmic side; the sequence is ARACQHAHGIIRLHKRQSPAHQGFGLRGA. Residues 241 to 266 form a helical membrane-spanning segment; it reads ATLTILLGIFFLCWGPFFLHLTLVVF. Over 267 to 279 the chain is Extracellular; the sequence is CPQHLTCSCIFKN. The chain crosses the membrane as a helical span at residues 280–300; sequence FKVFLTLIICNTIIDPLIYAF. Residues 301-316 are Cytoplasmic-facing; the sequence is RSQELRRTLKEVLCSW. The S-palmitoyl cysteine moiety is linked to residue cysteine 314.

Belongs to the G-protein coupled receptor 1 family. In terms of assembly, interacts with MGRN1, but does not undergo MGRN1-mediated ubiquitination; this interaction competes with GNAS-binding and thus inhibits agonist-induced cAMP production. Interacts with OPN3; the interaction results in a decrease in MC1R-mediated cAMP signaling and ultimately a decrease in melanin production in melanocytes.

It is found in the cell membrane. Its function is as follows. Receptor for MSH (alpha, beta and gamma) and ACTH. The activity of this receptor is mediated by G proteins which activate adenylate cyclase. Mediates melanogenesis, the production of eumelanin (black/brown) and phaeomelanin (red/yellow), via regulation of cAMP signaling in melanocytes. The protein is Melanocyte-stimulating hormone receptor (MC1R) of Leontocebus fuscicollis (Brown-mantled tamarin).